The chain runs to 409 residues: Probable peptidoglycan glycosyltransferase FtsW (409 aa).

9 helical membrane passes run 42-62 (LFTL…SASL), 72-92 (PFHF…VMLA), 108-128 (LLLL…EVNG), 135-155 (VGPI…IYMA), 178-198 (LLFI…VVVL), 213-233 (LWQF…LIIV), 303-323 (FLGV…ALII), 337-357 (YLAY…IGVA), and 368-388 (LPLV…VGLL).

This sequence belongs to the SEDS family. FtsW subfamily.

The protein localises to the cell inner membrane. The enzyme catalyses [GlcNAc-(1-&gt;4)-Mur2Ac(oyl-L-Ala-gamma-D-Glu-L-Lys-D-Ala-D-Ala)](n)-di-trans,octa-cis-undecaprenyl diphosphate + beta-D-GlcNAc-(1-&gt;4)-Mur2Ac(oyl-L-Ala-gamma-D-Glu-L-Lys-D-Ala-D-Ala)-di-trans,octa-cis-undecaprenyl diphosphate = [GlcNAc-(1-&gt;4)-Mur2Ac(oyl-L-Ala-gamma-D-Glu-L-Lys-D-Ala-D-Ala)](n+1)-di-trans,octa-cis-undecaprenyl diphosphate + di-trans,octa-cis-undecaprenyl diphosphate + H(+). It functions in the pathway cell wall biogenesis; peptidoglycan biosynthesis. In terms of biological role, peptidoglycan polymerase that is essential for cell division. This chain is Probable peptidoglycan glycosyltransferase FtsW, found in Idiomarina loihiensis (strain ATCC BAA-735 / DSM 15497 / L2-TR).